A 396-amino-acid polypeptide reads, in one-letter code: Fumarate--(S)-2,3-diaminopropanoate ligase (396 aa).

The enzyme catalyses (S)-2,3-diaminopropanoate + fumarate + ATP = N(3)-fumaroyl-(S)-2,3-diaminopropanoate + AMP + diphosphate. It functions in the pathway antibiotic biosynthesis. In terms of biological role, involved in dapdiamide antibiotics biosynthesis. Ligates fumarate and 2,3-diaminopropionate (DAP) to form N-beta-fumaroyl-DAP. Can also form N-succinoyl-DAP from succinate and DAP, with lower efficiency. The protein is Fumarate--(S)-2,3-diaminopropanoate ligase of Enterobacter agglomerans (Erwinia herbicola).